Reading from the N-terminus, the 227-residue chain is Large ribosomal subunit protein uL1 (227 aa).

This sequence belongs to the universal ribosomal protein uL1 family. As to quaternary structure, part of the 50S ribosomal subunit.

In terms of biological role, binds directly to 23S rRNA. The L1 stalk is quite mobile in the ribosome, and is involved in E site tRNA release. Its function is as follows. Protein L1 is also a translational repressor protein, it controls the translation of the L11 operon by binding to its mRNA. In Tropheryma whipplei (strain TW08/27) (Whipple's bacillus), this protein is Large ribosomal subunit protein uL1.